The following is a 542-amino-acid chain: MGEKMAEEERFPNTTHEGFNVTLHTTLVVTTKLVLPTPGKPILPVQTGEQAQQEEQSSGMTIFFSLLVLAICIILVHLLIRYRLHFLPESVAVVSLGILMGAVIKIIEFKKLANWKEEEMFRPNMFFLLLLPPIIFESGYSLHKGNFFQNIGSITLFAVFGTAISAFVVGGGIYFLGQADVISKLNMTDSFAFGSLISAVDPVATIAIFNALHVDPVLNMLVFGESILNDAVSIVLTNTAEGLTRKNMSDVSGWQTFLQALDYFLKMFFGSAALGTLTGLISALVLKHIDLRKTPSLEFGMMIIFAYLPYGLAEGISLSETCVFAFLGLSIFSFPHKFEISFVIWCIVLVLFGRAVNIFPLSYLLNFFRDHKITPKMMFIMWFSGLRGAIPYALSLHLDLEPMEKRQLIGTTTIVIVLFTILLLGGSTMPLIRLMDIEDAKARRRNKKDVNLSKTEKMGNTVESEHLSELTEEEYEAHYIRRQDLKGFMWLDAKYLNPFFTRRLTQEDLHHGRIQMKTLTNKWYEEVRQGPSGSEDDEQELL.

11 helical membrane passes run 55–75 (EQSS…CIIL), 79–99 (LIRY…LGIL), 118–138 (EEMF…IFES), 151–171 (IGSI…VVGG), 186–206 (NMTD…VATI), 256–276 (TFLQ…ALGT), 306–326 (AYLP…VFAF), 349–369 (LVLF…NFFR), 374–394 (TPKM…PYAL), 412–432 (TTIV…MPLI), and 446–466 (NKKD…ESEH). At Thr471 the chain carries Phosphothreonine. A phosphoserine mark is found at Ser532 and Ser534.

This sequence belongs to the monovalent cation:proton antiporter 1 (CPA1) transporter (TC 2.A.36) family.

The protein resides in the golgi apparatus membrane. It localises to the golgi apparatus. It is found in the trans-Golgi network membrane. The protein localises to the endosome. Its subcellular location is the multivesicular body membrane. The protein resides in the apical cell membrane. It localises to the cytoplasmic vesicle. It is found in the secretory vesicle. The protein localises to the acrosome. It carries out the reaction Na(+)(in) + H(+)(out) = Na(+)(out) + H(+)(in). Functionally, na(+)/H(+) antiporter. Mediates the electoneutral exchange of intracellular H(+) ions for extracellular Na(+) in 1:1 stoichiometry. Acts as an Na(+)/H(+) exchanger in the trans-Golgi. Contributes to the regulation of pH regulation of Golgi apparatus, and consequently, in protein trafficking and endosomal morphology. In germ cells, plays a crucial role in acrosome biogenesis and sperm development, probably by playing a role in the fusion of the Golgi-derived vesicles that form the acrosomal cap. Can also be active at the cell surface of specialized cells. In the small intestine, at the cell membrane, plays a major physiological role in transepithelial absorption of Na(+) and regulates intracellular pH homeostasis of intestinal epithelial cells. Acts as an important regulator of mucosal integrity in the intestine and in the stomach, could mediate the pH fluctuation necessary for mucin exocytosis or assist membrane trafficking of other proteins. Plays a role in photoreceptor survival and in the maintenance of intracellular pH homeostasis in retinal pigment epithelium (RPE cells). The chain is Sodium/hydrogen exchanger 8 (SLC9A8) from Macaca fascicularis (Crab-eating macaque).